Consider the following 329-residue polypeptide: Flotillin-like protein FloA (329 aa).

Transmembrane regions (helical) follow at residues 5-25 and 27-47; these read IFLL…LSFI and LGLW…TLVG.

It belongs to the flotillin-like FloA family. In terms of assembly, homooligomerizes.

Its subcellular location is the cell membrane. The protein resides in the membrane raft. Found in functional membrane microdomains (FMM) that may be equivalent to eukaryotic membrane rafts. FMMs are highly dynamic and increase in number as cells age. Flotillins are thought to be important factors in membrane fluidity. The protein is Flotillin-like protein FloA of Thermoanaerobacter sp. (strain X514).